Reading from the N-terminus, the 159-residue chain is Phosphopantetheine adenylyltransferase (159 aa).

Residue T10 coordinates substrate. Residues 10 to 11 (TF) and H18 contribute to the ATP site. Substrate-binding residues include K42, L74, and R88. Residues 89 to 91 (GLR), E99, and 124 to 130 (NSFISST) contribute to the ATP site.

The protein belongs to the bacterial CoaD family. In terms of assembly, homohexamer. It depends on Mg(2+) as a cofactor.

It is found in the cytoplasm. The enzyme catalyses (R)-4'-phosphopantetheine + ATP + H(+) = 3'-dephospho-CoA + diphosphate. The protein operates within cofactor biosynthesis; coenzyme A biosynthesis; CoA from (R)-pantothenate: step 4/5. Its function is as follows. Reversibly transfers an adenylyl group from ATP to 4'-phosphopantetheine, yielding dephospho-CoA (dPCoA) and pyrophosphate. This is Phosphopantetheine adenylyltransferase from Shewanella pealeana (strain ATCC 700345 / ANG-SQ1).